The sequence spans 1639 residues: Protein GFS12 (1639 aa).

A Protein kinase 1 domain is found at 206–294 (LEEKSKLRCL…IRPSNILLSD (89 aa)). The BEACH domain occupies 336 to 608 (LKISSHLDWQ…FHGFGVDNKR (273 aa)). The region spanning 715 to 788 (IAGDIFSIGC…AKSLLDSPYF (74 aa)) is the Protein kinase 2 domain. WD repeat units lie at residues 1290–1333 (AHHG…CVSS) and 1336–1373 (AHEE…LISL). The span at 1377–1398 (SPSDQDQASSDPSSKNNSNPCN) shows a compositional bias: low complexity. Positions 1377–1399 (SPSDQDQASSDPSSKNNSNPCNR) are disordered. WD repeat units follow at residues 1465–1499 (ALCS…RLFD), 1511–1549 (AHDG…TPQP), and 1609–1639 (RVKS…RICC).

It belongs to the protein kinase superfamily. Tyr protein kinase family. In terms of assembly, interacts (via protein kinase 2 domain) with BCHC1 (via PH-BEACH domain). In terms of tissue distribution, weakly expressed in the cotyledons of germinating seedlings. Restricted to the vascular tissues of cotyledons. Detected in root tips, apical meristem, young flower buds and receptacles.

Its function is as follows. May act predominantly to suppress BCHC1, which itself is a negative factor in protein storage vacuole (PSV) trafficking regulation and plant effector triggered immunity (ETI). Required for ETI, but not for cell death. The sequence is that of Protein GFS12 from Arabidopsis thaliana (Mouse-ear cress).